Here is a 387-residue protein sequence, read N- to C-terminus: Pepsin A (387 aa).

The N-terminal stretch at 1 to 15 (MKWLLLLSLVALSEC) is a signal peptide. The propeptide at 16–61 (LYKVSLIKKKSLRKNLIEHGLLKDFLKNNTLDPASKYFPQGEAATM) is activation peptide. The region spanning 75 to 384 (YFGTIGIGTP…DRANNQVGLA (310 aa)) is the Peptidase A1 domain. Asp-93 is a catalytic residue. The cysteines at positions 106 and 111 are disulfide-linked. Phosphoserine is present on Ser-129. Cys-267 and Cys-271 are joined by a disulfide. Asp-276 is a catalytic residue. Cysteines 310 and 343 form a disulfide.

Belongs to the peptidase A1 family.

Its subcellular location is the secreted. The catalysed reaction is Preferential cleavage: hydrophobic, preferably aromatic, residues in P1 and P1' positions. Cleaves 1-Phe-|-Val-2, 4-Gln-|-His-5, 13-Glu-|-Ala-14, 14-Ala-|-Leu-15, 15-Leu-|-Tyr-16, 16-Tyr-|-Leu-17, 23-Gly-|-Phe-24, 24-Phe-|-Phe-25 and 25-Phe-|-Tyr-26 bonds in the B chain of insulin.. Its activity is regulated as follows. Inhibited by pepstatin. In terms of biological role, shows particularly broad specificity; although bonds involving phenylalanine and leucine are preferred, many others are also cleaved to some extent. This chain is Pepsin A (PGA), found in Callithrix jacchus (White-tufted-ear marmoset).